The chain runs to 667 residues: Trifunctional UDP-glucose 4,6-dehydratase/UDP-4-keto-6-deoxy-D-glucose 3,5-epimerase/UDP-4-keto-L-rhamnose-reductase RHM2 (667 aa).

NAD(+) is bound at residue 15–21 (GAAGFIA). Residue T134 participates in substrate binding. D135 (proton donor) is an active-site residue. Residues E136 and Y161 each act as proton acceptor in the active site. Residue 389–395 (GKTGWLG) participates in NADP(+) binding.

The protein in the N-terminal section; belongs to the NAD(P)-dependent epimerase/dehydratase family. dTDP-glucose dehydratase subfamily. In the C-terminal section; belongs to the dTDP-4-dehydrorhamnose reductase family. It depends on NAD(+) as a cofactor. NADP(+) is required as a cofactor. In terms of tissue distribution, expressed in roots, stems, leaves, seedlings, inflorescence tips, and siliques.

The catalysed reaction is UDP-alpha-D-glucose = UDP-4-dehydro-6-deoxy-alpha-D-glucose + H2O. It participates in carbohydrate biosynthesis. In terms of biological role, trifunctional enzyme involved in UDP-beta-L-rhamnose biosynthesis, a precursor of the primary cell wall components rhamnogalacturonan I (RG-I) and rhamnogalacturonan II (RG-II). Catalyzes the dehydration of UDP-glucose to form UDP-4-dehydro-6-deoxy-D-glucose followed by the epimerization of the C3' and C5' positions of UDP-4-dehydro-6-deoxy-D-glucose to form UDP-4-keto-beta-L-rhamnose and the reduction of UDP-4-keto-beta-L-rhamnose to yield UDP-beta-L-rhamnose. Required for the normal seed coat epidermal development. This is Trifunctional UDP-glucose 4,6-dehydratase/UDP-4-keto-6-deoxy-D-glucose 3,5-epimerase/UDP-4-keto-L-rhamnose-reductase RHM2 from Arabidopsis thaliana (Mouse-ear cress).